The chain runs to 518 residues: Nif-specific regulatory protein (518 aa).

Residues 35-176 (NTARALAAIL…MVANLISQPL (142 aa)) enclose the GAF domain. Residues 205 to 432 (VGKSQAMRQT…LENCLERASV (228 aa)) enclose the Sigma-54 factor interaction domain. ATP-binding positions include 232–239 (GESGTGKE) and 295–304 (ADGGTLFLDE). The tract at residues 433-475 (MTDEGLIDRDVILFNHHESPALSVKPGLPLATDESWLDQELDE) is inter-domain linker. Residues 476-518 (RQRVIAALEKTGWVQAKAARLLGMTPRQIAYRIQIMDINMHRI) are C-terminal DNA-binding domain. The H-T-H motif DNA-binding region spans 490 to 509 (QAKAARLLGMTPRQIAYRIQ).

As to quaternary structure, interacts with sigma-54.

Required for activation of most nif operons, which are directly involved in nitrogen fixation. The chain is Nif-specific regulatory protein (nifA) from Enterobacter agglomerans (Erwinia herbicola).